The primary structure comprises 334 residues: Immune-associated nucleotide-binding protein 3 (334 aa).

An AIG1-type G domain is found at 11–219; sequence KAVKNIVLVG…FRGKMYLEIK (209 aa). Positions 20-27 are G1; it reads GRTGNGKS. GTP-binding positions include 20–28 and Ser41; that span reads GRTGNGKSA. Positions 47–51 are G2; that stretch reads GVTKT. A G3 region spans residues 69–72; sequence DTPG. Residues 139 to 142 form a G4 region; sequence TGGD. Residues 178–180 form a G5 region; the sequence is NNM. A GTP-binding site is contributed by Asn179. Positions 272–306 form a coiled coil; sequence SAAHERMVSMLNENLENAHRENIDLRKAHDHEQKK.

It belongs to the TRAFAC class TrmE-Era-EngA-EngB-Septin-like GTPase superfamily. AIG1/Toc34/Toc159-like paraseptin GTPase family. IAN subfamily. Mostly expressed in pollen. Also detected in lateral roots and radicles.

The polypeptide is Immune-associated nucleotide-binding protein 3 (Arabidopsis thaliana (Mouse-ear cress)).